We begin with the raw amino-acid sequence, 502 residues long: RNA polymerase sigma factor sigA (502 aa).

A chloroplast-targeting transit peptide spans 1–23 (MATAAVIGLNTGKRLLSSSFYHS). Positions 57-71 (YSPSFPSSNRHTQSA) are enriched in polar residues. A disordered region spans residues 57 to 92 (YSPSFPSSNRHTQSAKALKESVDVASTEKPWLPNGT). T170 carries the phosphothreonine modification. The short motif at 287–300 (DLVQGGLIGLLRGI) is the Polymerase core binding element. The segment at residues 461–480 (WEDISKRIGLSRERVRQVGL) is a DNA-binding region (H-T-H motif).

This sequence belongs to the sigma-70 factor family. Interacts with SIB1 in chloroplast. Binds to CSK. Post-translationally, the phosphorylation of Thr-170 mediated by oxidative conditions of plastoquinone (PQ) changes the promoter specificity, selectively inhibiting the transcription of the psaA gene, which encodes a PS-I protein. Phosphorylation of the holoenzyme occurs in the dark. This phosphorylation in response to plastoquinone redox state modification is mediated by CSK. As to expression, highly expressed in leaves, and to a lesser extent in roots. Expressed in old seedlings (8 days), cotyledons, hypocotyls, leaves, sepals and siliques.

The protein localises to the plastid. It is found in the chloroplast. In terms of biological role, essential protein. Sigma factors are initiation factors that promote the attachment of plastid-encoded RNA polymerase (PEP) to specific initiation sites and are then released. Controls the transcription of the psaA gene and thus modulates photosystem stoichiometry. Thereby maintains a harmonious electron flow and photosynthetic efficiency. This is RNA polymerase sigma factor sigA (SIGA) from Arabidopsis thaliana (Mouse-ear cress).